We begin with the raw amino-acid sequence, 1946 residues long: MSGYQGGHHDQYDQGYGQAGHGDGYYQDDQYYDQGHGDHAAQGDHAAQGDHGAQGTQGDGYYDESGYYHADANNPYHQDGGYYDGHDQYQDDYYNNNQGYYDGEYNQGYAQGGRHPSEEESETFSDFTMRSDMARAAEMDYYGRGDEQYNGYGEGGRGYRPPSSQLSYGGNRSSGASTPNYGMEYGNGLASQRSKEPYPAWTSDAQIPLSKEEIEDIFLDLTSKFGFQRDSMRNMYDHLMTLLDSRASRMTPNQALLSLHADYIGGDNANYRKWYFAAHLDLDDAVGFANASTKNRKRKAKKGKKKGGEAGNEAETLQELEGDDSLEAAEYRWKTRMNRMSQYDRVRQIALYLLCWGEANQVRFMPECLCFIFKCADDYLNSPACQALVEPVEEFTFLNNVITPLYQYCRDQGYEILNGVYVRRERDHKHIIGYDDCNQLFWYPEGIERIVLEDKSKLVDLPPAERYLKLKEVNWKKCFFKTYKESRSWFHLLLNFNRIWVIHLTMFWFYTSHNAPSLITYQYEQQKDNQPPASKQFSIVGFGGAIASLIQIFATLAEWVYVPRRWAGAQHLTKRLLFLIVILVLNVAPGVKVFMFHGNKDGKDADQKNKDTPIDKAIGIVHFVIAVFTFLFFSVMPLGGLLGSYLTKKSRRYVASQTFTASYPRLTGNDMAMSFGLWLTVFGAKFGESYVYLTLSFRDPIRYLSIMKIDCLGDAMFGSTAATQQILCKHQPTIVLILMTFTDLIFFFLDTYLFYVILNTVFSIARSFYIGSSIWTPWRNIFSRLPKRIYSKVLATTDMEIKYKPKVLISQVWNAIVISMYREHLLAIDHVQKLLYHQVPSEQEGKRTLRAPTFFVSQEDHSFKTEFFPSHSEAERRISFFAQSLSTPIPEPVPVDNMPTFTVMIPHYSEKILLSLREIIREDEPYSRVTLLEYLKQLHPHEWECFVKDTKILADETAQMNGEPEKSEKDTAKSKIDDLPFYCIGFKSSAPEYTLRTRIWASLRSQTLYRTVSGFMNYSRAIKLLYRVENPEVVQMFGGNSEKLERELERMARRKFKLVVSMQRYSKFKKEEMENAEFLLRAYPDLQIAYLDEEPPLAEGEEPRLYSALIDGHSELMENGMRRPKFRVQLSGNPVLGDGKSDNQNHAIIFYRGEYIQLIDANQDNYLEECLKIRSVLAEFEEMKPDNHSPYTPGVKNDVHTPVAILGAREYIFSENIGILGDVAAGKEQTFGTLFARTMAQVGGKLHYGHPDFLNGIFMTTRGGVSKAQKGLHLNEDIFAGMNALVRGGRIKHCEYYQCGKGRDLGFGSILNFTTKIGTGMGEQWLSREYYYLGTQLPLDRFLSFYYAHAGFHVNNMFIMLSVQSFMLTLMSIGALRHETIRCDYNPQKPITDPLYPTKCSNTDELMGWVYRCIISIFFVFFISFVPLIVQELTERGVWRAALRFIKQFCSLSPFFEVFVCQIYANSVQSDLAFGGARYIGTGRGFATARIPFGVLYSRFAGQSIYFGARLLMMLLFATSTAWQPALTYFWIVLLGLIISPFLYNPHQFAWTDFFIDYRDFLRWLSRGNSRAHASSWIMFCRLSRTRITGYKRKVMGDASAKMSADVPRAAVANIFLTEILTPLLLAATTTVAYLFVNAQTGVTDNDKNSSSSPGFKIGPSGALIRLAVVAFAPIGINAGVLAAMFGMACCMGPVLNMCCKKFGPVLAGIAHGAAAVFMIIFFEVMYVLEGFNFARALAGIIAAMCIQRFIFKLIVSLALTREFKTDQSNIAFWNGKWYSMGWHSVSQPAREFLCKITELSMFSADFILGHWILFMMAPLILIPQIDKIHSMMLFWLLPSRQIRPPIYSMKQSKLRRRRVIRFAILYFVLFIIFLALVVAPGVIGKKFLGDTIFKALDNGNGGPANLHLLQPWGLDNNNTEGKTETGTKAGGADASATDASKLRLF.

2 disordered regions span residues 1 to 127 (MSGY…FSDF) and 152 to 198 (YGEG…KEPY). 3 stretches are compositionally biased toward low complexity: residues 24-34 (GYYQDDQYYDQ), 43-60 (GDHA…QGDG), and 91-109 (DDYY…NQGY). A compositionally biased stretch (polar residues) spans 165-180 (QLSYGGNRSSGASTPN). Residues Asn-171 and Asn-290 are each glycosylated (N-linked (GlcNAc...) asparagine). The tract at residues 297-316 (KRKAKKGKKKGGEAGNEAET) is disordered. The next 6 helical transmembrane spans lie at 489–509 (WFHL…MFWF), 537–557 (FSIV…ATLA), 576–596 (LLFL…VFMF), 618–638 (IGIV…VMPL), 675–695 (FGLW…YLTL), and 734–754 (IVLI…TYLF). Residues Asn-1017 and Asn-1312 are each glycosylated (N-linked (GlcNAc...) asparagine). Transmembrane regions (helical) follow at residues 1356–1376 (NMFI…IGAL), 1413–1433 (CIIS…VQEL), 1500–1520 (FAGQ…FATS), 1523–1543 (WQPA…SPFL), and 1615–1635 (IFLT…VAYL). The N-linked (GlcNAc...) asparagine glycan is linked to Asn-1649. A run of 5 helical transmembrane segments spans residues 1667-1687 (LAVV…AMFG), 1703-1723 (FGPV…IIFF), 1738-1758 (LAGI…IVSL), 1803-1823 (FSAD…LILI), and 1864-1884 (AILY…PGVI). N-linked (GlcNAc...) asparagine glycosylation occurs at Asn-1918. The segment at 1920–1946 (TEGKTETGTKAGGADASATDASKLRLF) is disordered. A compositionally biased stretch (low complexity) spans 1925-1940 (ETGTKAGGADASATDA).

This sequence belongs to the glycosyltransferase 48 family. In terms of assembly, component of the 1,3-beta-glucan synthase (GS) complex composed of a catalytic subunit GLS1 and a regulatory subunit RHO1.

The protein resides in the membrane. It localises to the cell membrane. The catalysed reaction is [(1-&gt;3)-beta-D-glucosyl](n) + UDP-alpha-D-glucose = [(1-&gt;3)-beta-D-glucosyl](n+1) + UDP + H(+). Its activity is regulated as follows. Activated by iron ions. Inhibited by manganese, copper and zinc ions. Functionally, catalytic subunit of the 1,3-beta-glucan synthase (GS). Synthesizes 1,3-beta-glucan, a major structural component of the fungal cell wall. Involved in cell wall synthesis, maintenance and remodeling. This is 1,3-beta-glucan synthase component from Cordyceps militaris (strain CM01) (Caterpillar fungus).